Consider the following 939-residue polypeptide: Protein translocase subunit SecA 1 (939 aa).

ATP-binding positions include Gln-85, 103 to 107, and Asp-504; that span reads GEGKT. The disordered stretch occupies residues 848 to 939; the sequence is EVPVEDEKPS…QSKGGRRRKK (92 aa). 3 stretches are compositionally biased toward basic and acidic residues: residues 852 to 863, 872 to 889, and 914 to 925; these read EDEKPSLEKEDA, PEIR…DRLH, and PVRSEADGLTRA. Over residues 926 to 939 the composition is skewed to basic residues; the sequence is ERRKQSKGGRRRKK.

This sequence belongs to the SecA family. Monomer and homodimer. Part of the essential Sec protein translocation apparatus which comprises SecA, SecYEG and auxiliary proteins SecDF. Other proteins may also be involved.

It localises to the cell membrane. It is found in the cytoplasm. The enzyme catalyses ATP + H2O + cellular proteinSide 1 = ADP + phosphate + cellular proteinSide 2.. Functionally, part of the Sec protein translocase complex. Interacts with the SecYEG preprotein conducting channel. Has a central role in coupling the hydrolysis of ATP to the transfer of proteins into and across the cell membrane, serving as an ATP-driven molecular motor driving the stepwise translocation of polypeptide chains across the membrane. This Streptomyces avermitilis (strain ATCC 31267 / DSM 46492 / JCM 5070 / NBRC 14893 / NCIMB 12804 / NRRL 8165 / MA-4680) protein is Protein translocase subunit SecA 1.